The sequence spans 193 residues: Putative manganese efflux pump MntP (193 aa).

The next 6 membrane-spanning stretches (helical) occupy residues 8–28, 37–57, 61–81, 109–129, 138–158, and 172–192; these read LLAI…GIIL, LVMA…GWMF, FSHL…AFLG, MAIA…LLGI, PILI…YFGI, and LWGG…HLFL.

This sequence belongs to the MntP (TC 9.B.29) family.

The protein resides in the cell inner membrane. Functionally, probably functions as a manganese efflux pump. This Bacteroides thetaiotaomicron (strain ATCC 29148 / DSM 2079 / JCM 5827 / CCUG 10774 / NCTC 10582 / VPI-5482 / E50) protein is Putative manganese efflux pump MntP.